Reading from the N-terminus, the 398-residue chain is Subtilisin-like protease CPC735_050320 (398 aa).

An N-terminal signal peptide occupies residues 1–19; the sequence is MVFLGKILPLALAALSVNG. Residues 20–117 constitute a propeptide that is removed on maturation; it reads AEILSAPGAE…IERDQIMKAS (98 aa). The Inhibitor I9 domain maps to 35 to 115; sequence YIVVMKEGTS…AYIERDQIMK (81 aa). Residues 127–398 form the Peptidase S8 domain; the sequence is SWGLARVSSR…NRLINNGVSQ (272 aa). Residues aspartate 159 and histidine 190 each act as charge relay system in the active site. 2 N-linked (GlcNAc...) asparagine glycosylation sites follow: asparagine 220 and asparagine 250. The active-site Charge relay system is serine 344.

It belongs to the peptidase S8 family.

The protein localises to the secreted. Functionally, secreted subtilisin-like serine protease with keratinolytic activity that contributes to pathogenicity. This chain is Subtilisin-like protease CPC735_050320, found in Coccidioides posadasii (strain C735) (Valley fever fungus).